A 295-amino-acid polypeptide reads, in one-letter code: sn-glycerol-3-phosphate transport system permease protein UgpA (295 aa).

The Cytoplasmic portion of the chain corresponds to 1–11; the sequence is MSSSRPVFRSR. Residues 12-32 traverse the membrane as a helical segment; that stretch reads WLPYLLVAPQLIITVIFFIWP. At 33 to 80 the chain is on the periplasmic side; it reads AGEALWYSLQSVDPFGFSSQFVGLDNFVTLFHDSYYLDAFWTTIKFST. One can recognise an ABC transmembrane type-1 domain in the interval 76–284; sequence IKFSTFVTVS…FLVIVLTVVQ (209 aa). The chain crosses the membrane as a helical span at residues 81-101; it reads FVTVSGLLVSLFFAALVEYIV. Topologically, residues 102–109 are cytoplasmic; sequence RGSRFYQT. A helical membrane pass occupies residues 110 to 130; sequence LMLLPYAVAPAVAAVLWIFLF. Topologically, residues 131-156 are periplasmic; that stretch reads NPGRGLITHFLAEFGYDWNHAQNSGQ. Residues 157–177 traverse the membrane as a helical segment; the sequence is AMFLVVFASVWKQISYNFLFF. Residues 178–207 are Cytoplasmic-facing; it reads YAALQSIPRSLIEAAAIDGAGPIRRFFKIA. A helical membrane pass occupies residues 208–228; the sequence is LPLIAPVSFFLLVVNLVYAFF. Topologically, residues 229 to 262 are periplasmic; the sequence is DTFPVIDAATSGGPVQATTTLIYKIYREGFTGLD. Residues 263-283 form a helical membrane-spanning segment; sequence LASSAAQSVVLMFLVIVLTVV. Over 284–295 the chain is Cytoplasmic; it reads QFRYVESKVRYQ.

Belongs to the binding-protein-dependent transport system permease family. UgpAE subfamily. The complex is composed of two ATP-binding proteins (UgpC), two transmembrane proteins (UgpA and UgpE) and a solute-binding protein (UgpB).

Its subcellular location is the cell inner membrane. Part of the ABC transporter complex UgpBAEC involved in sn-glycerol-3-phosphate (G3P) import. Probably responsible for the translocation of the substrate across the membrane. This Escherichia coli (strain UTI89 / UPEC) protein is sn-glycerol-3-phosphate transport system permease protein UgpA (ugpA).